Consider the following 311-residue polypeptide: Dof zinc finger protein DOF1.4 (311 aa).

Over residues 1-12 (MQSKNMIVASSH) the composition is skewed to polar residues. The interval 1–29 (MQSKNMIVASSHQQQQQQQPQQPQPQLKC) is disordered. A compositionally biased stretch (low complexity) spans 13 to 26 (QQQQQQQPQQPQPQ). The Dof-type zinc-finger motif lies at 27–81 (LKCPRCDSSNTKFCYYNNYSLSQPRHFCKACKRYWTRGGTLRNVPVGGSYRKNKR). Residues C29, C32, C54, and C57 each coordinate Zn(2+). Residues 72–110 (VGGSYRKNKRVKRPSTATTTTASTVSTTNSSSPNNPHQI) form a disordered region. Residues 85–107 (PSTATTTTASTVSTTNSSSPNNP) are compositionally biased toward low complexity.

It localises to the nucleus. Its function is as follows. Transcription factor that binds specifically to a 5'-AA[AG]G-3' consensus core sequence. In Arabidopsis thaliana (Mouse-ear cress), this protein is Dof zinc finger protein DOF1.4 (DOF1.4).